A 39-amino-acid polypeptide reads, in one-letter code: Hementin (39 aa).

A divalent metal cation is required as a cofactor. In terms of tissue distribution, expressed mainly in the posterior salivary glands and, to a lesser extent, in the anterior salivary glands and secreted into the proboscis (at protein level).

Its subcellular location is the secreted. Inhibited by EDTA, cysteine, DTT and sodium phosphate. Partially inhibited by EGTA, citrate, Tris and glycine. Not inhibited by DFP, PMSF, iodoacetic acid and leupeptin. Requires sodium chloride concentrations higher than 0.15 M for activity. Functionally, metalloprotease with anticoagulant activity. Cleaves fibrinogen Aalpha (FGA), gamma (FGG) and Bbeta (FGB) chains after positions 'Asn-121', 'Lys-160' and 'Pro-102', respectively. Breaks down cross-linked and non-cross-linked fibrin clots. Prevents and reverts platelet aggregation induced by ADP and collagen. Prevents thrombin-induced platelet clotting. Does not affect plasma levels of coagulation factors prothrombin (F2), V (F5), VII (F7), VIII (F8), IX (F9), X (F10), XI (F11), XII (F12), plasma kallikrein (KLKB1) and kininogen-1 (KNG1). The sequence is that of Hementin from Haementeria ghilianii (Amazon leech).